A 224-amino-acid polypeptide reads, in one-letter code: uncharacterized protein (224 aa).

Helical transmembrane passes span 25–45, 54–74, 91–111, 119–139, 142–162, and 174–194; these read MMLALAIITSLISEFISIPFF, ISVVFLVACAFFVSLGWSLTI, IGVLTVTLANLSTILFTRLYF, FCWIFVFLFTTLSNALLLTTL, ILITPLFWYYFGYVQTPNFLI, and HFFFFGINNYWLGIFCLYSFF.

It localises to the cell membrane. This is an uncharacterized protein from Mycoplasma genitalium (strain ATCC 33530 / DSM 19775 / NCTC 10195 / G37) (Mycoplasmoides genitalium).